A 32-amino-acid chain; its full sequence is ATP synthase subunit O, mitochondrial (32 aa).

The protein belongs to the ATPase delta chain family. In terms of assembly, F-type ATPases have 2 components, CF(1) - the catalytic core - and CF(0) - the membrane proton channel. CF(1) has five subunits: alpha(3), beta(3), gamma(1), delta(1), epsilon(1). CF(0) has three main subunits: a, b and c.

The protein resides in the mitochondrion. The protein localises to the mitochondrion inner membrane. Functionally, mitochondrial membrane ATP synthase (F(1)F(0) ATP synthase or Complex V) produces ATP from ADP in the presence of a proton gradient across the membrane which is generated by electron transport complexes of the respiratory chain. F-type ATPases consist of two structural domains, F(1) - containing the extramembraneous catalytic core and F(0) - containing the membrane proton channel, linked together by a central stalk and a peripheral stalk. During catalysis, ATP synthesis in the catalytic domain of F(1) is coupled via a rotary mechanism of the central stalk subunits to proton translocation. Part of the complex F(0) domain and the peripheric stalk, which acts as a stator to hold the catalytic alpha(3)beta(3) subcomplex and subunit a/ATP6 static relative to the rotary elements. The chain is ATP synthase subunit O, mitochondrial from Spinacia oleracea (Spinach).